The sequence spans 839 residues: Lon protease (839 aa).

One can recognise a Lon N-terminal domain in the interval 31–224 (LFLIPIKSRP…KVLLFLKKEI (194 aa)). Residue 377 to 384 (GPPGVGKT) coordinates ATP. In terms of domain architecture, Lon proteolytic spans 613 to 790 (ASVPGTALGL…EEVALLLFDE (178 aa)). Residues S696 and K739 contribute to the active site. The tract at residues 807 to 839 (IVNPTRKLSPKKKTTQKQKLSLSKQKGNNQKKK) is disordered. Residues 823–832 (KQKLSLSKQK) show a composition bias toward low complexity.

It belongs to the peptidase S16 family. As to quaternary structure, homohexamer. Organized in a ring with a central cavity.

It is found in the cytoplasm. The catalysed reaction is Hydrolysis of proteins in presence of ATP.. In terms of biological role, ATP-dependent serine protease that mediates the selective degradation of mutant and abnormal proteins as well as certain short-lived regulatory proteins. Required for cellular homeostasis and for survival from DNA damage and developmental changes induced by stress. Degrades polypeptides processively to yield small peptide fragments that are 5 to 10 amino acids long. Binds to DNA in a double-stranded, site-specific manner. In Leptospira interrogans serogroup Icterohaemorrhagiae serovar copenhageni (strain Fiocruz L1-130), this protein is Lon protease.